A 253-amino-acid polypeptide reads, in one-letter code: REF/SRPP-like protein Os05g0151300/LOC_Os05g05940 (253 aa).

The segment at 1 to 26 (MADSGSDAPISNRPEEEVTVEKTPEM) is disordered. Over residues 13 to 26 (RPEEEVTVEKTPEM) the composition is skewed to basic and acidic residues.

The protein belongs to the REF/SRPP family.

This Oryza sativa subsp. japonica (Rice) protein is REF/SRPP-like protein Os05g0151300/LOC_Os05g05940.